A 353-amino-acid chain; its full sequence is L-tryptophan dehydrogenase (353 aa).

Arg-44 contacts NAD(+). Catalysis depends on Lys-80, which acts as the Proton donor/acceptor. NAD(+) is bound by residues Asp-114, Thr-146, Gly-176 to Gly-181, Lys-204, and Ala-255 to Asn-257.

It belongs to the Glu/Leu/Phe/Val dehydrogenases family. Homodimer.

It carries out the reaction L-tryptophan + NAD(+) + H2O = indole-3-pyruvate + NH4(+) + NADH + H(+). Highly susceptible to inhibition by indole-3-pyruvate. Activity is not affected by the presence of metal ions, EDTA, KCl or DMSO. Functionally, catalyzes the reversible oxidative deamination of L-tryptophan to indole-3-pyruvate in the presence of NAD(+). Shows weak activity with L-phenylalanine, but cannot use other L-amino acids and D-Trp. Cannot use NADP(+) for oxidative deamination of L-Trp, and shows only weak activity with NADPH for reductive amination of indole-3-pyruvate. Involved in the biosynthesis of scytonemin, a cyanobacterial radiation-absorbing pigment. In Nostoc punctiforme, this protein is L-tryptophan dehydrogenase.